Reading from the N-terminus, the 289-residue chain is Probable early E4 33 kDa protein (289 aa).

The protein belongs to the adenoviridae E4 30 to 34 kDa protein family. Interacts with E1B-55k.

It is found in the host nucleus. The protein localises to the host cytoplasm. Plays a major role to prevent cellular inhibition of viral genome replication by nuclear bodies. Assembles an SCF-like E3 ubiquitin ligase complex based on the cellular proteins ELOB, ELOC, CUL5 and RBX1, in cooperation with viral E1B-55K. This viral RING-type ligase ubiquitinates cellular substrates prior to proteasomal degradation: p53/TP53, LIG4, MRE11-RAD50-NBS1 (MRN) complex, ITGA3, DAXX and BLM. This is Probable early E4 33 kDa protein from Mus musculus (Mouse).